The sequence spans 446 residues: RUN domain-containing protein 3A (446 aa).

The interaction with RAP2A stretch occupies residues 1-298 (MEASFVQTTM…LQLQLEEAAA (298 aa)). The RUN domain maps to 52–189 (DDSSEEFVNF…IDFSFCLKGE (138 aa)). Thr-215 bears the Phosphothreonine mark. The interval 216-239 (DEEERHSAESSTSEDNSPEHPYLP) is disordered. Position 232 is a phosphoserine (Ser-232). Positions 267 to 322 (YLEELVRLRESQLKDLEAENRRLQLQLEEAAAQNQREKRELEGVILELQEQLTGLI) form a coiled coil. Residues 372-384 (PLSAEASLSSDSQ) are compositionally biased toward polar residues. Residues 372–404 (PLSAEASLSSDSQRLGEGTRDEEPWGPIGKDPT) form a disordered region. Residues Ser-416 and Ser-419 each carry the phosphoserine modification.

It belongs to the RUNDC3 family. Interacts with the GTP-bound form of RAP2A.

In terms of biological role, may act as an effector of RAP2A in neuronal cells. This is RUN domain-containing protein 3A (RUNDC3A) from Homo sapiens (Human).